The chain runs to 284 residues: Signal peptidase I (284 aa).

Residues 4-22 traverse the membrane as a helical segment; that stretch reads NFPLLLVIAVAVCGLLALL. Residues 23–58 are Cytoplasmic-facing; the sequence is DLVFFAPRRRSAIASYQGSVSQPDAVVIEKLNKEPL. The helical transmembrane segment at 59–77 threads the bilayer; it reads LVEYGKSFFPVLFIVLVLR. The Periplasmic segment spans residues 78–284; it reads SFLVEPFQIP…PNFSRVGLIK (207 aa). Active-site residues include Ser-90 and Lys-145.

The protein belongs to the peptidase S26 family.

The protein localises to the cell inner membrane. It carries out the reaction Cleavage of hydrophobic, N-terminal signal or leader sequences from secreted and periplasmic proteins.. This chain is Signal peptidase I (lepB), found in Pseudomonas fluorescens.